The following is a 60-amino-acid chain: Ixodegrin-like peptide (60 aa).

The N-terminal stretch at 1–21 is a signal peptide; it reads MNAAFIAALLILGALTLDAMA. The Cell attachment site motif lies at 49 to 51; that stretch reads RGD.

It belongs to the ixodegrin family. Post-translationally, contains 3 disulfide bonds. In terms of tissue distribution, expressed in salivary glands.

It is found in the secreted. Tick salivary platelet aggregation inhibitor that plays an important part in the anti-hemostatic strategy of ticks. Inhibits platelet aggregation induced by ADP, thrombin and thromboxane A2 (TXA2). Blocks platelet adhesion to soluble collagen (most probably through the binding to alpha-2/beta-1 integrin (ITGA2/ITGB1)) and binds to purified glycoprotein IIb/IIIa (ITGA2B/ITGB3) in a dose-dependent manner. In vivo, reduces thrombus weight effectively in a rat arteriovenous shunt model and inhibits thrombosis in a carrageenan-induced mouse tail thrombosis model. This chain is Ixodegrin-like peptide, found in Ixodes scapularis (Black-legged tick).